The sequence spans 425 residues: bZIP transcription factor RISBZ2 (425 aa).

Disordered regions lie at residues 1 to 50 (MERV…GGGG) and 169 to 257 (NSIG…AAHL). Over residues 30–50 (QGGGGVASGGGGGVAGGGGGG) the composition is skewed to gly residues. Residues 171 to 182 (IGGNATPVQNML) are compositionally biased toward polar residues. Positions 213–222 (SDDDDMEGEA) are enriched in acidic residues. Residues 231-247 (ADQRLQRRKQSNRESAR) are compositionally biased toward basic and acidic residues. The bZIP domain maps to 232 to 295 (DQRLQRRKQS…NDAAVDNRVL (64 aa)). A basic motif region spans residues 234-253 (RLQRRKQSNRESARRSRSRK). The segment at 260-274 (LEAQVSQLRVENSSL) is leucine-zipper. Residues 334 to 354 (MPFNSSPSEATSDAAVPIQDD) form a disordered region.

As to quaternary structure, heterodimer with RISBZ1/BZIP58.

The protein resides in the nucleus. In terms of biological role, transcriptional activator that binds to the DNA specific sequence 5'-GCCACGT[AC]AG-3' found in the alpha-globulin gene promoter. Does not bind to promoters of other major storage genes such as glutelin, prolamin and albumin. Binds to the DNA specific sequence 5'-TGAGTCA-3' found in seed storage protein gene promoters. The polypeptide is bZIP transcription factor RISBZ2 (Oryza sativa subsp. japonica (Rice)).